The chain runs to 511 residues: Cytochrome P450 26B1 (511 aa).

C440 provides a ligand contact to heme.

Belongs to the cytochrome P450 family. It depends on heme as a cofactor.

It is found in the endoplasmic reticulum membrane. The protein resides in the microsome membrane. It catalyses the reaction all-trans-retinoate + reduced [NADPH--hemoprotein reductase] + O2 = all-trans-4-hydroxyretinoate + oxidized [NADPH--hemoprotein reductase] + H2O + H(+). It carries out the reaction all-trans-retinoate + reduced [NADPH--hemoprotein reductase] + O2 = all-trans-18-hydroxyretinoate + oxidized [NADPH--hemoprotein reductase] + H2O + H(+). A cytochrome P450 monooxygenase involved in the metabolism of retinoates (RAs), the active metabolites of vitamin A, and critical signaling molecules in animals. RAs exist as at least four different isomers: all-trans-RA (atRA), 9-cis-RA, 13-cis-RA, and 9,13-dicis-RA, where atRA is considered to be the biologically active isomer, although 9-cis-RA and 13-cis-RA also have activity. Catalyzes the hydroxylation of atRA primarily at C-4 and C-18, thereby contributing to the regulation of atRA homeostasis and signaling. Hydroxylation of atRA limits its biological activity and initiates a degradative process leading to its eventual elimination. Involved in the convertion of atRA to all-trans-4-oxo-RA. Can oxidize all-trans-13,14-dihydroretinoate (DRA) to metabolites which could include all-trans-4-oxo-DRA, all-trans-4-hydroxy-DRA, all-trans-5,8-epoxy-DRA, and all-trans-18-hydroxy-DRA. Plays a role in skeletal development, both at the level of patterning and in the ossification of bone and the establishment of some synovial joints. The protein is Cytochrome P450 26B1 of Danio rerio (Zebrafish).